Consider the following 732-residue polypeptide: ATP-dependent RNA helicase DBP7 (732 aa).

The segment at 1–91 is disordered; the sequence is MIEDDGMLLN…QSNNESVKDV (91 aa). Composition is skewed to basic and acidic residues over residues 42–56 and 64–75; these read MMME…KTFE and DTNKKPKSDSSG. A compositionally biased stretch (polar residues) spans 76–86; sequence RKSYNQQSNNE. Positions 144-173 match the Q motif motif; it reads DNFDSLKIEQQLVNHLNEKMRIQKPTSIQK. One can recognise a Helicase ATP-binding domain in the interval 178-372; sequence QLLSSKNNDL…NVALQNYKMI (195 aa). 191-198 lines the ATP pocket; the sequence is AQTGSGKT. Positions 307 to 310 match the DEAD box motif; sequence DEAD. Residues 420–599 form the Helicase C-terminal domain; the sequence is QKKKKLDYVS…KLVNYTNDLL (180 aa). The segment at 692–711 is disordered; the sequence is MGLQNTKNGGEAKKNSKESA. Over residues 701 to 711 the composition is skewed to basic and acidic residues; that stretch reads GEAKKNSKESA.

It belongs to the DEAD box helicase family. DDX31/DBP7 subfamily.

Its subcellular location is the nucleus. It localises to the nucleolus. The catalysed reaction is ATP + H2O = ADP + phosphate + H(+). ATP-binding RNA helicase involved in the biogenesis of 60S ribosomal subunits and is required for the normal formation of 25S and 5.8S rRNAs. This Vanderwaltozyma polyspora (strain ATCC 22028 / DSM 70294 / BCRC 21397 / CBS 2163 / NBRC 10782 / NRRL Y-8283 / UCD 57-17) (Kluyveromyces polysporus) protein is ATP-dependent RNA helicase DBP7 (DBP7).